The following is a 762-amino-acid chain: Proline-rich receptor-like protein kinase PERK10 (762 aa).

Positions 1–322 (MTTPAQAPRE…PTPVTDNSSS (322 aa)) are disordered. Residues 1-328 (MTTPAQAPRE…NSSSSGISIA (328 aa)) are Extracellular-facing. Over residues 13–23 (SLSPSLASPPL) the composition is skewed to low complexity. An N-linked (GlcNAc...) asparagine glycan is attached at asparagine 37. Residues 41 to 57 (PTREPTNGNPPETTNTP) show a composition bias toward low complexity. Composition is skewed to pro residues over residues 60–210 (SSPP…PSTP), 231–246 (PPPP…PPSP), and 254–275 (HPSP…PDPL). The span at 276–305 (PSNSSSPPTLLPPSSVVSPPSPPRKSVSGP) shows a compositional bias: low complexity. Asparagine 278 and asparagine 319 each carry an N-linked (GlcNAc...) asparagine glycan. The chain crosses the membrane as a helical span at residues 329-349 (AVVGVSIGVALVLLTLIGVVV). Over 350 to 762 (CCLKKRKKRL…NSYISKDENL (413 aa)) the chain is Cytoplasmic. The tract at residues 370–410 (TPMESSSPRSDSALLKTQSSAPLVGNRSSNRTYLSQSEPGG) is disordered. Polar residues predominate over residues 372-407 (MESSSPRSDSALLKTQSSAPLVGNRSSNRTYLSQSE). Positions 430–706 (FSDENLLGEG…SQIVRAFDSL (277 aa)) constitute a Protein kinase domain. Residues 436–444 (LGEGGFGRV) and lysine 458 each bind ATP. Aspartate 554 (proton acceptor) is an active-site residue.

The protein belongs to the protein kinase superfamily. Ser/Thr protein kinase family. Interacts with KIPK1 and KIPK2 (via its cytosolic domain). In terms of tissue distribution, mostly expressed in inflorescence bolts and flower buds, and, to a lower extent, in roots, seedlings, leaves and siliques.

It localises to the cell membrane. The catalysed reaction is L-seryl-[protein] + ATP = O-phospho-L-seryl-[protein] + ADP + H(+). It catalyses the reaction L-threonyl-[protein] + ATP = O-phospho-L-threonyl-[protein] + ADP + H(+). Functionally, could be involved in the negative regulation of root growth. The sequence is that of Proline-rich receptor-like protein kinase PERK10 (PERK10) from Arabidopsis thaliana (Mouse-ear cress).